We begin with the raw amino-acid sequence, 325 residues long: Forkhead box protein B1 (325 aa).

The segment at residues 12 to 103 (QKPPYSYISL…GDMFENGSFL (92 aa)) is a DNA-binding region (fork-head). Positions 284-309 (LSNSPPSLSPTSSQTATSQSSPATPS) are enriched in low complexity. Residues 284 to 325 (LSNSPPSLSPTSSQTATSQSSPATPSETLTSPASALHSVAVH) are disordered.

Expressed widespread in the early developing ventricular zone of the neural tube and later restricted to areas of the spinal cord, hindbrain, thalamus and hypothalamus. Expressed in epithelial cells of developing and adult mammary glands.

The protein resides in the nucleus. Its function is as follows. Transcription factor expressed by neural progenitor cells in specific regions of the embryonic neuroepithelium. Essential for the mammillary nuclei maintenance. Negatively regulates the proliferation of oligodendrocyte progenitors and promotes oligodendrocyte maturation. Also expressed in mammary glands, plays a role in lactation, controls development of mammary glands and the inferior colliculi of the midbrain in the central nervous system that regulates the milk-ejection reflex. The protein is Forkhead box protein B1 (Foxb1) of Mus musculus (Mouse).